Consider the following 647-residue polypeptide: Starch synthase 1, chloroplastic/amyloplastic (647 aa).

The N-terminal 41 residues, Met1–Arg41, are a transit peptide targeting the chloroplast. Residues Pro66 to Pro91 show a composition bias toward pro residues. Positions Pro66 to Val95 are disordered. Lys153 contacts ADP-alpha-D-glucose.

The protein belongs to the glycosyltransferase 1 family. Bacterial/plant glycogen synthase subfamily.

The protein localises to the plastid. Its subcellular location is the chloroplast. It is found in the amyloplast. The catalysed reaction is [(1-&gt;4)-alpha-D-glucosyl](n) + ADP-alpha-D-glucose = [(1-&gt;4)-alpha-D-glucosyl](n+1) + ADP + H(+). The protein operates within glycan biosynthesis; starch biosynthesis. The protein is Starch synthase 1, chloroplastic/amyloplastic (WSSI-2) of Triticum aestivum (Wheat).